Consider the following 398-residue polypeptide: Cysteine protease ATG4A (398 aa).

The active-site Nucleophile is Cys77. Active-site residues include Asp279 and His281. The LIR signature appears at 393-396 (FEIL).

It belongs to the peptidase C54 family. Interacts with ATG9A; the interaction is direct.

It localises to the cytoplasm. The enzyme catalyses [protein]-C-terminal L-amino acid-glycyl-phosphatidylethanolamide + H2O = [protein]-C-terminal L-amino acid-glycine + a 1,2-diacyl-sn-glycero-3-phosphoethanolamine. With respect to regulation, inhibited by N-ethylmaleimide. Redox-regulated during autophagy since reducing conditions activate ATG4A whereas an oxidizing environment such as the presence of H(2)O(2) inhibits its activity. Its function is as follows. Cysteine protease that plays a key role in autophagy by mediating both proteolytic activation and delipidation of ATG8 family proteins. The protease activity is required for proteolytic activation of ATG8 family proteins: cleaves the C-terminal amino acid of ATG8 proteins to reveal a C-terminal glycine. Exposure of the glycine at the C-terminus is essential for ATG8 proteins conjugation to phosphatidylethanolamine (PE) and insertion to membranes, which is necessary for autophagy. Preferred substrate is GABARAPL2 followed by MAP1LC3A and GABARAP. Protease activity is also required to counteract formation of high-molecular weight conjugates of ATG8 proteins (ATG8ylation): acts as a deubiquitinating-like enzyme that removes ATG8 conjugated to other proteins, such as ATG3. In addition to the protease activity, also mediates delipidation of ATG8 family proteins. Catalyzes delipidation of PE-conjugated forms of ATG8 proteins during macroautophagy. Compared to ATG4B, the major protein for proteolytic activation of ATG8 proteins, shows weaker ability to cleave the C-terminal amino acid of ATG8 proteins, while it displays stronger delipidation activity. Involved in phagophore growth during mitophagy independently of its protease activity and of ATG8 proteins: acts by regulating ATG9A trafficking to mitochondria and promoting phagophore-endoplasmic reticulum contacts during the lipid transfer phase of mitophagy. The sequence is that of Cysteine protease ATG4A from Homo sapiens (Human).